The chain runs to 151 residues: Small ribosomal subunit protein uS15 (151 aa).

The protein belongs to the universal ribosomal protein uS15 family.

This Agaricus bisporus (White button mushroom) protein is Small ribosomal subunit protein uS15 (RPS13).